Consider the following 393-residue polypeptide: uncharacterized protein (393 aa).

Residues 2–266 form the OBG-type G domain; that stretch reads AMIGLVGKPN…AEKAGIIKRK (265 aa). GTP contacts are provided by residues 8–15 and 78–82; these read GKPNVGKS and DVAGL. In terms of domain architecture, TGS spans 314 to 390; that stretch reads DMIVVYPVED…KHNDIIKIVS (77 aa).

The protein belongs to the TRAFAC class OBG-HflX-like GTPase superfamily. OBG GTPase family.

This is an uncharacterized protein from Methanocaldococcus jannaschii (strain ATCC 43067 / DSM 2661 / JAL-1 / JCM 10045 / NBRC 100440) (Methanococcus jannaschii).